A 459-amino-acid chain; its full sequence is Argininosuccinate lyase (459 aa).

Belongs to the lyase 1 family. Argininosuccinate lyase subfamily.

The protein localises to the cytoplasm. The catalysed reaction is 2-(N(omega)-L-arginino)succinate = fumarate + L-arginine. The protein operates within amino-acid biosynthesis; L-arginine biosynthesis; L-arginine from L-ornithine and carbamoyl phosphate: step 3/3. The protein is Argininosuccinate lyase of Prochlorococcus marinus (strain MIT 9515).